The sequence spans 351 residues: Caveolin-2 (351 aa).

The segment covering 1–14 (MTRQNTSESDNTQR) has biased composition (polar residues). 3 disordered regions span residues 1–55 (MTRQ…QGIA), 71–93 (HRTSLNQEVPTPQRRSHPQYDNL), and 144–193 (QKGS…PEME). The Cytoplasmic segment spans residues 1–261 (MTRQNTSESD…FEIVRIYSYK (261 aa)). The segment covering 22–31 (TVDDIDELTD) has biased composition (acidic residues). The segment covering 38-51 (HHHHHHHHEHHHQH) has biased composition (basic residues). A compositionally biased stretch (low complexity) spans 167-184 (PAQQSAPPTQQSRPQTTS). Residues 262 to 290 (ILTLIFGLIIAFLGGILFALFAFLNIWIF) constitute an intramembrane region (helical). The Cytoplasmic portion of the chain corresponds to 291-351 (RPILILTRMA…EVWEKHIHHV (61 aa)).

It belongs to the caveolin family. In terms of assembly, homooligomer. Expressed in intracellular bodies in intestinal cells.

It localises to the golgi apparatus membrane. It is found in the cell membrane. Its subcellular location is the membrane. The protein resides in the caveola. The protein localises to the apical cell membrane. Functionally, may act as a scaffolding protein within caveolar membranes. Interacts directly with G-protein alpha subunits and can regulate their activity. Thought to have a role in the uptake of lipids and proteins in the intestinal cells; operates in the apical uptake of lipid markers and trafficking of yolk proteins. Affects fecundity and egg laying. This Caenorhabditis elegans protein is Caveolin-2 (cav-2).